The primary structure comprises 658 residues: A-type ATP synthase subunit I (658 aa).

The next 7 membrane-spanning stretches (helical) occupy residues 383–403, 427–447, 475–495, 507–526, 530–552, 568–588, and 591–611; these read MAFV…YGII, IIMM…NGFI, ILIM…ILGA, ALGS…LYLV, IFGA…LFGL, LLAL…LTGL, and EMIP…GHIA.

It belongs to the V-ATPase 116 kDa subunit family. As to quaternary structure, has multiple subunits with at least A(3), B(3), C, D, E, F, H, I and proteolipid K(x).

The protein resides in the cell membrane. Component of the A-type ATP synthase that produces ATP from ADP in the presence of a proton gradient across the membrane. This chain is A-type ATP synthase subunit I, found in Methanothermobacter thermautotrophicus (strain ATCC 29096 / DSM 1053 / JCM 10044 / NBRC 100330 / Delta H) (Methanobacterium thermoautotrophicum).